Reading from the N-terminus, the 547-residue chain is Chaperonin GroEL (547 aa).

ATP contacts are provided by residues Thr30 to Pro33, Lys51, Asp87 to Thr91, Gly415, and Asp495.

The protein belongs to the chaperonin (HSP60) family. In terms of assembly, forms a cylinder of 14 subunits composed of two heptameric rings stacked back-to-back. Interacts with the co-chaperonin GroES.

The protein resides in the cytoplasm. The catalysed reaction is ATP + H2O + a folded polypeptide = ADP + phosphate + an unfolded polypeptide.. In terms of biological role, together with its co-chaperonin GroES, plays an essential role in assisting protein folding. The GroEL-GroES system forms a nano-cage that allows encapsulation of the non-native substrate proteins and provides a physical environment optimized to promote and accelerate protein folding. The polypeptide is Chaperonin GroEL (Ralstonia nicotianae (strain ATCC BAA-1114 / GMI1000) (Ralstonia solanacearum)).